A 551-amino-acid polypeptide reads, in one-letter code: MAVRVPLGCTGSFCPRLLPLLALLELLVDPSLGRVHHLALKDDVRHKVHLNTFGFFKDGYMVVNISSLSVNEPEGVKDKDTEIGFSLDRTKNDGFSSYLDEDVNYCILKKKSMSSVTLLILDISGSGVKVRSPPEAGKQLPEIVFSKDEKVPSRSQEPAVSSNPKDSKVQRTPDGSKAQRSTVDSKTIAEKFFSIHKNDGAVSFQFFFNISTSDQEGLYSLYFHKCPSSKLRSGEQVSFSLNIDITEKNPDSYLSAGEIPLPKLYVSMALLFFLSGTVWIHILRKRRNDVFKIHWLMAALPFTKSLSLVFHAIDYHYISSQGFPIEGWAVVYYITHLLKGALLFITIALIGTGWAFIKHILSDKDKKIFMIVIPLQVLANVAYIIIESTEEGTTEYGLWKDSLFLVDLLCCGAILFPVVWSIRHLQEASATDGKAAINLAKLKLFRHYYVLIVCYIYFTRIIAFLLKFAVPFQWKWLYQLLDETATLVFFVLTGYKFRPASDNPYLQLSQEEDDLEMESVVTTSGVMENMKKVKKVSNGAVEPQGSWEGTA.

The first 33 residues, 1-33 (MAVRVPLGCTGSFCPRLLPLLALLELLVDPSLG), serve as a signal peptide directing secretion. At 34–262 (RVHHLALKDD…YLSAGEIPLP (229 aa)) the chain is on the extracellular side. The N-linked (GlcNAc...) asparagine glycan is linked to N64. The segment at 127–183 (GVKVRSPPEAGKQLPEIVFSKDEKVPSRSQEPAVSSNPKDSKVQRTPDGSKAQRSTV) is disordered. Over residues 153–164 (SRSQEPAVSSNP) the composition is skewed to polar residues. A glycan (N-linked (GlcNAc...) asparagine) is linked at N209. Residues 263–283 (KLYVSMALLFFLSGTVWIHIL) traverse the membrane as a helical segment. Residues 284–292 (RKRRNDVFK) lie on the Cytoplasmic side of the membrane. A helical transmembrane segment spans residues 293–313 (IHWLMAALPFTKSLSLVFHAI). Over 314 to 336 (DYHYISSQGFPIEGWAVVYYITH) the chain is Extracellular. A helical transmembrane segment spans residues 337–357 (LLKGALLFITIALIGTGWAFI). The Cytoplasmic portion of the chain corresponds to 358–367 (KHILSDKDKK). Residues 368 to 388 (IFMIVIPLQVLANVAYIIIES) form a helical membrane-spanning segment. The Extracellular segment spans residues 389-401 (TEEGTTEYGLWKD). Residues 402 to 422 (SLFLVDLLCCGAILFPVVWSI) form a helical membrane-spanning segment. Topologically, residues 423–443 (RHLQEASATDGKAAINLAKLK) are cytoplasmic. A helical transmembrane segment spans residues 444-466 (LFRHYYVLIVCYIYFTRIIAFLL). Residues 467-475 (KFAVPFQWK) lie on the Extracellular side of the membrane. The chain crosses the membrane as a helical span at residues 476–495 (WLYQLLDETATLVFFVLTGY). Topologically, residues 496–551 (KFRPASDNPYLQLSQEEDDLEMESVVTTSGVMENMKKVKKVSNGAVEPQGSWEGTA) are cytoplasmic.

It belongs to the LU7TM family. In terms of processing, cleaved by FURIN to yield two fragments that remain associated via a disulfide bond. In terms of tissue distribution, widely expressed. Not detected in the duodenum, nor in the exocrine pancreas.

The protein localises to the cell membrane. Its subcellular location is the golgi apparatus. It localises to the trans-Golgi network membrane. Its function is as follows. Has been proposed to act as a receptor for neuronostatin, a peptide derived from the somatostatin/SST precursor. Involved in blood sugar regulation through the induction of glucagon in response to low glucose. In Rattus norvegicus (Rat), this protein is Protein GPR107 (Gpr107).